The sequence spans 508 residues: Glycogen synthase (508 aa).

Lysine 27 contacts ADP-alpha-D-glucose.

This sequence belongs to the glycosyltransferase 1 family. Bacterial/plant glycogen synthase subfamily.

It carries out the reaction [(1-&gt;4)-alpha-D-glucosyl](n) + ADP-alpha-D-glucose = [(1-&gt;4)-alpha-D-glucosyl](n+1) + ADP + H(+). The protein operates within glycan biosynthesis; glycogen biosynthesis. Synthesizes alpha-1,4-glucan chains using ADP-glucose. This Photobacterium profundum (strain SS9) protein is Glycogen synthase.